Consider the following 328-residue polypeptide: 4-hydroxythreonine-4-phosphate dehydrogenase (328 aa).

The substrate site is built by H130 and T131. Residues H163, H208, and H263 each coordinate a divalent metal cation. The substrate site is built by K271, N280, and R289.

Belongs to the PdxA family. Homodimer. Zn(2+) is required as a cofactor. The cofactor is Mg(2+). It depends on Co(2+) as a cofactor.

It is found in the cytoplasm. It carries out the reaction 4-(phosphooxy)-L-threonine + NAD(+) = 3-amino-2-oxopropyl phosphate + CO2 + NADH. The protein operates within cofactor biosynthesis; pyridoxine 5'-phosphate biosynthesis; pyridoxine 5'-phosphate from D-erythrose 4-phosphate: step 4/5. Its function is as follows. Catalyzes the NAD(P)-dependent oxidation of 4-(phosphooxy)-L-threonine (HTP) into 2-amino-3-oxo-4-(phosphooxy)butyric acid which spontaneously decarboxylates to form 3-amino-2-oxopropyl phosphate (AHAP). In Burkholderia vietnamiensis (strain G4 / LMG 22486) (Burkholderia cepacia (strain R1808)), this protein is 4-hydroxythreonine-4-phosphate dehydrogenase.